Reading from the N-terminus, the 372-residue chain is Molybdopterin synthase catalytic subunit (372 aa).

Residues 101-102 (HR), Lys-117, and 124-126 (KKE) each bind substrate.

Belongs to the MoaE family. MOCS2B subfamily. As to quaternary structure, heterotetramer; composed of 2 small (Mocs2A) and 2 large (Mocs2B) subunits.

Its subcellular location is the cytoplasm. The enzyme catalyses 2 [molybdopterin-synthase sulfur-carrier protein]-C-terminal-Gly-aminoethanethioate + cyclic pyranopterin phosphate + H2O = molybdopterin + 2 [molybdopterin-synthase sulfur-carrier protein]-C-terminal Gly-Gly + 2 H(+). Its pathway is cofactor biosynthesis; molybdopterin biosynthesis. Catalytic subunit of the molybdopterin synthase complex, a complex that catalyzes the conversion of precursor Z into molybdopterin. Acts by mediating the incorporation of 2 sulfur atoms from thiocarboxylated Mocs2A into precursor Z to generate a dithiolene group. The polypeptide is Molybdopterin synthase catalytic subunit (Drosophila willistoni (Fruit fly)).